The chain runs to 130 residues: Small ribosomal subunit protein uS8 (130 aa).

The protein belongs to the universal ribosomal protein uS8 family. As to quaternary structure, part of the 30S ribosomal subunit. Contacts proteins S5 and S12.

Its function is as follows. One of the primary rRNA binding proteins, it binds directly to 16S rRNA central domain where it helps coordinate assembly of the platform of the 30S subunit. The polypeptide is Small ribosomal subunit protein uS8 (Proteus mirabilis (strain HI4320)).